Consider the following 359-residue polypeptide: 3-dehydroquinate synthase (359 aa).

Residues 69–74, 103–107, 127–128, K140, K149, and 167–170 contribute to the NAD(+) site; these read DGEAYK, GVIGD, TT, and CLKT. Zn(2+) contacts are provided by E182, H245, and H262.

The protein belongs to the sugar phosphate cyclases superfamily. Dehydroquinate synthase family. It depends on Co(2+) as a cofactor. Requires Zn(2+) as cofactor. The cofactor is NAD(+).

It localises to the cytoplasm. The enzyme catalyses 7-phospho-2-dehydro-3-deoxy-D-arabino-heptonate = 3-dehydroquinate + phosphate. Its pathway is metabolic intermediate biosynthesis; chorismate biosynthesis; chorismate from D-erythrose 4-phosphate and phosphoenolpyruvate: step 2/7. In terms of biological role, catalyzes the conversion of 3-deoxy-D-arabino-heptulosonate 7-phosphate (DAHP) to dehydroquinate (DHQ). The polypeptide is 3-dehydroquinate synthase (Aeromonas salmonicida (strain A449)).